The following is a 409-amino-acid chain: Tyrosine--tRNA ligase (409 aa).

Residue tyrosine 35 participates in L-tyrosine binding. A 'HIGH' region motif is present at residues 40 to 49; sequence CTAESLHVGS. Positions 172 and 176 each coordinate L-tyrosine. Residues 232–236 carry the 'KMSKS' region motif; it reads KMGKT. Residue lysine 235 participates in ATP binding. The S4 RNA-binding domain occupies 343-409; that stretch reads ISILDLVILS…KKKHIKVELI (67 aa).

The protein belongs to the class-I aminoacyl-tRNA synthetase family. TyrS type 1 subfamily. In terms of assembly, homodimer.

The protein localises to the cytoplasm. It carries out the reaction tRNA(Tyr) + L-tyrosine + ATP = L-tyrosyl-tRNA(Tyr) + AMP + diphosphate + H(+). Catalyzes the attachment of tyrosine to tRNA(Tyr) in a two-step reaction: tyrosine is first activated by ATP to form Tyr-AMP and then transferred to the acceptor end of tRNA(Tyr). This Pelagibacter ubique (strain HTCC1062) protein is Tyrosine--tRNA ligase.